The sequence spans 94 residues: Pyrimidine/purine nucleoside phosphorylase (94 aa).

It belongs to the nucleoside phosphorylase PpnP family.

The enzyme catalyses a purine D-ribonucleoside + phosphate = a purine nucleobase + alpha-D-ribose 1-phosphate. It carries out the reaction adenosine + phosphate = alpha-D-ribose 1-phosphate + adenine. It catalyses the reaction cytidine + phosphate = cytosine + alpha-D-ribose 1-phosphate. The catalysed reaction is guanosine + phosphate = alpha-D-ribose 1-phosphate + guanine. The enzyme catalyses inosine + phosphate = alpha-D-ribose 1-phosphate + hypoxanthine. It carries out the reaction thymidine + phosphate = 2-deoxy-alpha-D-ribose 1-phosphate + thymine. It catalyses the reaction uridine + phosphate = alpha-D-ribose 1-phosphate + uracil. The catalysed reaction is xanthosine + phosphate = alpha-D-ribose 1-phosphate + xanthine. In terms of biological role, catalyzes the phosphorolysis of diverse nucleosides, yielding D-ribose 1-phosphate and the respective free bases. Can use uridine, adenosine, guanosine, cytidine, thymidine, inosine and xanthosine as substrates. Also catalyzes the reverse reactions. The chain is Pyrimidine/purine nucleoside phosphorylase from Pseudomonas fluorescens (strain Pf0-1).